Here is a 237-residue protein sequence, read N- to C-terminus: Cobalt-precorrin-2 C(20)-methyltransferase (237 aa).

This sequence belongs to the precorrin methyltransferase family. Homodimer.

It carries out the reaction Co-precorrin-2 + S-adenosyl-L-methionine = Co-precorrin-3 + S-adenosyl-L-homocysteine + H(+). It participates in cofactor biosynthesis; adenosylcobalamin biosynthesis; cob(II)yrinate a,c-diamide from sirohydrochlorin (anaerobic route): step 2/10. Methylates cobalt-precorrin-2 at the C-20 position to produce cobalt-precorrin-3A in the anaerobic cobalamin biosynthesis pathway. This chain is Cobalt-precorrin-2 C(20)-methyltransferase (cbiL), found in Salmonella typhimurium (strain LT2 / SGSC1412 / ATCC 700720).